The chain runs to 262 residues: Dihydroorotate dehydrogenase B (NAD(+)), electron transfer subunit (262 aa).

The region spanning 3 to 104 (QLQEMMTVVS…MGPLGNGFPV (102 aa)) is the FAD-binding FR-type domain. FAD is bound by residues 53 to 56 (RPIS), 70 to 72 (LYR), and 79 to 80 (GT). The [2Fe-2S] cluster site is built by cysteine 226, cysteine 231, cysteine 234, and cysteine 249.

It belongs to the PyrK family. Heterotetramer of 2 PyrK and 2 PyrD type B subunits. Requires [2Fe-2S] cluster as cofactor. The cofactor is FAD.

It participates in pyrimidine metabolism; UMP biosynthesis via de novo pathway; orotate from (S)-dihydroorotate (NAD(+) route): step 1/1. In terms of biological role, responsible for channeling the electrons from the oxidation of dihydroorotate from the FMN redox center in the PyrD type B subunit to the ultimate electron acceptor NAD(+). This Lactococcus lactis subsp. cremoris (strain SK11) protein is Dihydroorotate dehydrogenase B (NAD(+)), electron transfer subunit.